We begin with the raw amino-acid sequence, 171 residues long: Ribulose bisphosphate carboxylase small subunit, chloroplastic (171 aa).

The transit peptide at 1 to 50 (MATGAGAGAATVVSAFTGLKSTAQFPSSFKMSNAAAEWEQKTTSNGGRVR) directs the protein to the chloroplast.

This sequence belongs to the RuBisCO small chain family. As to quaternary structure, heterohexadecamer of 8 large and 8 small subunits.

Its subcellular location is the plastid. The protein localises to the chloroplast. Its function is as follows. RuBisCO catalyzes two reactions: the carboxylation of D-ribulose 1,5-bisphosphate, the primary event in carbon dioxide fixation, as well as the oxidative fragmentation of the pentose substrate. Both reactions occur simultaneously and in competition at the same active site. Although the small subunit is not catalytic it is essential for maximal activity. The protein is Ribulose bisphosphate carboxylase small subunit, chloroplastic of Pinus thunbergii (Japanese black pine).